Reading from the N-terminus, the 329-residue chain is Acetyl-coenzyme A carboxylase carboxyl transferase subunit alpha (329 aa).

One can recognise a CoA carboxyltransferase C-terminal domain in the interval 40–294 (QLESLAARRR…RAALERHLGE (255 aa)).

The protein belongs to the AccA family. Acetyl-CoA carboxylase is a heterohexamer composed of biotin carboxyl carrier protein (AccB), biotin carboxylase (AccC) and two subunits each of ACCase subunit alpha (AccA) and ACCase subunit beta (AccD).

It localises to the cytoplasm. It carries out the reaction N(6)-carboxybiotinyl-L-lysyl-[protein] + acetyl-CoA = N(6)-biotinyl-L-lysyl-[protein] + malonyl-CoA. It participates in lipid metabolism; malonyl-CoA biosynthesis; malonyl-CoA from acetyl-CoA: step 1/1. Functionally, component of the acetyl coenzyme A carboxylase (ACC) complex. First, biotin carboxylase catalyzes the carboxylation of biotin on its carrier protein (BCCP) and then the CO(2) group is transferred by the carboxyltransferase to acetyl-CoA to form malonyl-CoA. In Parasynechococcus marenigrum (strain WH8102), this protein is Acetyl-coenzyme A carboxylase carboxyl transferase subunit alpha.